The chain runs to 358 residues: Protein SRG1 (358 aa).

The 101-residue stretch at 209–309 (SVQSMRMNYY…RLSIATFHNV (101 aa)) folds into the Fe2OG dioxygenase domain. Fe cation is bound by residues histidine 233, aspartate 235, and histidine 290.

This sequence belongs to the iron/ascorbate-dependent oxidoreductase family. Low expression in roots and leaves.

This Arabidopsis thaliana (Mouse-ear cress) protein is Protein SRG1 (SRG1).